Here is a 310-residue protein sequence, read N- to C-terminus: Putative S-adenosyl-L-methionine-dependent methyltransferase Franean1_4929 (310 aa).

The interval 1 to 28 is disordered; it reads MSRPSAPRGRTELRSIHERGHERGSAGV. The segment covering 9 to 24 has biased composition (basic and acidic residues); it reads GRTELRSIHERGHERG. S-adenosyl-L-methionine contacts are provided by residues aspartate 136 and 165–166; that span reads DL.

Belongs to the UPF0677 family.

Functionally, exhibits S-adenosyl-L-methionine-dependent methyltransferase activity. The sequence is that of Putative S-adenosyl-L-methionine-dependent methyltransferase Franean1_4929 from Parafrankia sp. (strain EAN1pec).